The primary structure comprises 465 residues: Lactaldehyde dehydrogenase (465 aa).

220 to 225 (GSVEVG) contacts NAD(+). Residues E240 and C274 contribute to the active site.

It belongs to the aldehyde dehydrogenase family. In terms of assembly, homotetramer.

The enzyme catalyses (S)-lactaldehyde + NAD(+) + H2O = (S)-lactate + NADH + 2 H(+). It functions in the pathway cofactor biosynthesis; coenzyme F420 biosynthesis. In terms of biological role, involved in F420 biosynthesis through the oxidation of lactaldehyde to lactate. This chain is Lactaldehyde dehydrogenase, found in Methanococcus aeolicus (strain ATCC BAA-1280 / DSM 17508 / OCM 812 / Nankai-3).